We begin with the raw amino-acid sequence, 410 residues long: LL-diaminopimelate aminotransferase (410 aa).

The substrate site is built by Y15 and G42. Pyridoxal 5'-phosphate-binding positions include Y72, 108-109, Y132, N187, Y218, and 246-248; these read SK and SFS. 3 residues coordinate substrate: K109, Y132, and N187. K249 carries the N6-(pyridoxal phosphate)lysine modification. Positions 257 and 292 each coordinate pyridoxal 5'-phosphate. Residues N292 and R388 each coordinate substrate.

Belongs to the class-I pyridoxal-phosphate-dependent aminotransferase family. LL-diaminopimelate aminotransferase subfamily. Homodimer. Pyridoxal 5'-phosphate is required as a cofactor.

The enzyme catalyses (2S,6S)-2,6-diaminopimelate + 2-oxoglutarate = (S)-2,3,4,5-tetrahydrodipicolinate + L-glutamate + H2O + H(+). Its pathway is amino-acid biosynthesis; L-lysine biosynthesis via DAP pathway; LL-2,6-diaminopimelate from (S)-tetrahydrodipicolinate (aminotransferase route): step 1/1. Its function is as follows. Involved in the synthesis of meso-diaminopimelate (m-DAP or DL-DAP), required for both lysine and peptidoglycan biosynthesis. Catalyzes the direct conversion of tetrahydrodipicolinate to LL-diaminopimelate. The sequence is that of LL-diaminopimelate aminotransferase from Geobacter sulfurreducens (strain ATCC 51573 / DSM 12127 / PCA).